A 113-amino-acid chain; its full sequence is Large ribosomal subunit protein bL19 (113 aa).

This sequence belongs to the bacterial ribosomal protein bL19 family.

This protein is located at the 30S-50S ribosomal subunit interface and may play a role in the structure and function of the aminoacyl-tRNA binding site. In Mycobacterium bovis (strain ATCC BAA-935 / AF2122/97), this protein is Large ribosomal subunit protein bL19 (rplS).